The primary structure comprises 284 residues: SF-assemblin (284 aa).

Residues 1-30 (PTPSPEARVASRPFLDSPLPGSPRSGSPTG) are disordered. A nonhelical region region spans residues 1–38 (PTPSPEARVASRPFLDSPLPGSPRSGSPTGYITATKAI). A compositionally biased stretch (low complexity) spans 17 to 30 (SPLPGSPRSGSPTG). A rod region spans residues 39–284 (SAGKLEHVAE…QDGLRIVNNS (246 aa)). 2 coiled-coil regions span residues 56–102 (EIEL…QIQV) and 239–268 (LDEI…QAVN).

This sequence belongs to the SF-assemblin family. Post-translationally, consists of at least four isoforms including two phosphorylated.

It localises to the cytoplasm. The protein resides in the cytoskeleton. Major component of the striated microtubule-associated fibers (SMAFs; system-I-fibers). This is SF-assemblin from Spermatozopsis similis (Green alga).